The following is a 505-amino-acid chain: Salutaridine synthase (505 aa).

Residues 10 to 30 (DFWMIACTVIIVFALVKFMFS) traverse the membrane as a helical segment. Residue cysteine 444 participates in heme binding.

This sequence belongs to the cytochrome P450 family. Requires heme as cofactor.

The protein localises to the endoplasmic reticulum membrane. It carries out the reaction (R)-reticuline + reduced [NADPH--hemoprotein reductase] + O2 = salutaridine + oxidized [NADPH--hemoprotein reductase] + 2 H2O + H(+). Functionally, cytochrome P450 monooxygenase involved in biosynthesis of morphinan-type benzylisoquinoline and opiate alkaloids natural products. Catalyzes the formation of the morphinan alkaloid salutaridine by intramolecular phenol oxidation of (R)-reticuline without the incorporation of oxygen into the product. Can also use (R)-norreticuline as substrate. This chain is Salutaridine synthase, found in Papaver somniferum (Opium poppy).